A 50-amino-acid chain; its full sequence is uncharacterized protein (50 aa).

This is an uncharacterized protein from Sinorhizobium fredii (strain NBRC 101917 / NGR234).